The sequence spans 383 residues: Lipid-A-disaccharide synthase (383 aa).

It belongs to the LpxB family.

It catalyses the reaction 2-N,3-O-bis[(3R)-3-hydroxytetradecanoyl]-alpha-D-glucosaminyl 1-phosphate + UDP-2-N,3-O-bis[(3R)-3-hydroxytetradecanoyl]-alpha-D-glucosamine = lipid A disaccharide (E. coli) + UDP + H(+). The catalysed reaction is a lipid X + a UDP-2-N,3-O-bis[(3R)-3-hydroxyacyl]-alpha-D-glucosamine = a lipid A disaccharide + UDP + H(+). Its pathway is glycolipid biosynthesis; lipid IV(A) biosynthesis; lipid IV(A) from (3R)-3-hydroxytetradecanoyl-[acyl-carrier-protein] and UDP-N-acetyl-alpha-D-glucosamine: step 5/6. Condensation of UDP-2,3-diacylglucosamine and 2,3-diacylglucosamine-1-phosphate to form lipid A disaccharide, a precursor of lipid A, a phosphorylated glycolipid that anchors the lipopolysaccharide to the outer membrane of the cell. This chain is Lipid-A-disaccharide synthase, found in Pectobacterium atrosepticum (strain SCRI 1043 / ATCC BAA-672) (Erwinia carotovora subsp. atroseptica).